The primary structure comprises 288 residues: G1/S-specific cyclin-D2 (288 aa).

In terms of domain architecture, Cyclin N-terminal spans 26–151 (VLQNLLTIEE…VVLGKLKWNL (126 aa)). Residues 264–288 (DQDGSKSEDELDQASTPTDVRDIDL) form a disordered region. Ser-270 bears the Phosphoserine mark. Residue Thr-279 is modified to Phosphothreonine.

Belongs to the cyclin family. Cyclin D subfamily. In terms of assembly, interacts with either CDK4 or CDK6 protein kinase to form a serine/threonine kinase holoenzyme complex. The cyclin subunit imparts substrate specificity to the complex. Phosphorylation at Thr-279 by MAP kinases is required for ubiquitination and degradation by the DCX(AMBRA1) complex. Post-translationally, ubiquitinated by the DCX(AMBRA1) complex during the transition from G1 to S cell phase, leading to its degradation: ubiquitination is dependent on Thr-279 phosphorylation. The DCX(AMBRA1) complex represents the major regulator of CCND2 stability during the G1/S transition. Polyubiquitinated by the SCF(FBXL2) complex, leading to proteasomal degradation.

It localises to the nucleus. The protein localises to the cytoplasm. Its subcellular location is the nucleus membrane. In terms of biological role, regulatory component of the cyclin D2-CDK4 (DC) complex that phosphorylates and inhibits members of the retinoblastoma (RB) protein family including RB1 and regulates the cell-cycle during G(1)/S transition. Phosphorylation of RB1 allows dissociation of the transcription factor E2F from the RB/E2F complex and the subsequent transcription of E2F target genes which are responsible for the progression through the G(1) phase. Hypophosphorylates RB1 in early G(1) phase. Cyclin D-CDK4 complexes are major integrators of various mitogenenic and antimitogenic signals. The chain is G1/S-specific cyclin-D2 (CCND2) from Sus scrofa (Pig).